The primary structure comprises 214 residues: Endosomal/vacuolar adapter protein YPT35 (214 aa).

Positions 1-63 (MNDKISFLPP…ATITRTRPRR (63 aa)) are disordered. A PxP motif is present at residues 5-15 (ISFLPPEPIQL). Over residues 16 to 31 (LDEDSTEPELDIDSQQ) the composition is skewed to acidic residues. Positions 38-58 (SASNSNDSTSHSNDCGATITR) are enriched in low complexity. A phosphoserine mark is found at Ser-65 and Ser-66. In terms of domain architecture, PX spans 73–213 (FQKAHVSDCT…IQFLEPSKRV (141 aa)).

Belongs to the YPT35 family. In terms of assembly, interacts with RBD2, YIF1, YIP1 and YIP4.

The protein resides in the endosome membrane. It is found in the vacuole membrane. Recruits the lipid transfer protein VPS13 to endosomal and vacuolar membranes. The sequence is that of Endosomal/vacuolar adapter protein YPT35 (YPT35) from Saccharomyces cerevisiae (strain YJM789) (Baker's yeast).